We begin with the raw amino-acid sequence, 1505 residues long: Probable RNA-directed RNA polymerase (1505 aa).

Belongs to the totiviridae RNA-directed RNA polymerase family.

It carries out the reaction RNA(n) + a ribonucleoside 5'-triphosphate = RNA(n+1) + diphosphate. Its function is as follows. RNA-dependent RNA polymerase which replicates the viral genome. Catalyzes the transcription of fully conservative plus-strand genomic RNAs that are extruded from the virion into the cytoplasm where they function as mRNAs for translation of viral proteins and also as substrates for encapsidation to form new virions. Once encapsidated, the positive strand is converted to dsRNA by the RNA-directed RNA polymerase. Displays ssRNA-binding activity. The protein is Probable RNA-directed RNA polymerase (gag-pol) of Saccharomyces cerevisiae virus L-A (ScV-L-A).